A 188-amino-acid chain; its full sequence is Succinate dehydrogenase [ubiquinone] cytochrome b large subunit, mitochondrial (188 aa).

The N-terminal 31 residues, 1–31 (MSLLPYNATLCRVLRHNVKFIRSVQTSAARV), are a transit peptide targeting the mitochondrion. The Mitochondrial matrix portion of the chain corresponds to 32–69 (SAEKTPIQVWGWDYLMRQRALKRPIAPHLTIYKPQMTW). A helical membrane pass occupies residues 70 to 95 (MVSGLHRVTGCAMAGTLLIGGVGFSV). Residues Ser72 and Arg76 each contribute to the a rhodoquinol site. A ubiquinone contacts are provided by Ser72 and Arg76. Residues 96-113 (LPLDFTTFVEFIRGLGIP) are Mitochondrial intermembrane-facing. The helical transmembrane segment at 114-140 (WVILDTFKFIIAFPIAFHTLNGIRFIG) threads the bilayer. His131 is a heme b binding site. The Mitochondrial matrix segment spans residues 141–153 (FDMAKGTDIPSIY). A helical transmembrane segment spans residues 154 to 176 (RGAYLVLGLAALISLAVVVYPRW). Residues 177–188 (ERHKKATLPTNH) are Mitochondrial intermembrane-facing.

It belongs to the cytochrome b558 family. As to quaternary structure, component of the mitochondrial electron transport chain complex II composed of four subunits: a flavoprotein (Fp), an iron-sulfur protein (Ip), and a large cytochrome b (CybL) subunit and a small cytochrome b (CybS) subunit. There are 2 developmental stage-specific forms of complex II which have the Ip and CybL subunits in common. Complex II from the free-living larvae (aerobic environment) acts as a succinate dehydrogenase and is composed of the common subunit Ip and CybL and the stage specific subunits FpL and CybSL. Complex II from parasitic larvae and adults (anaerobic environment) acts as a fumarate reductase and is composed of the common subunit Ip and CybL and the stage specific subunits FpA and CybSA. Heme b is required as a cofactor. As to expression, expressed in adult muscles (at protein level).

The protein resides in the mitochondrion inner membrane. Its pathway is carbohydrate metabolism; tricarboxylic acid cycle; fumarate from succinate (eukaryal route): step 1/1. In terms of biological role, membrane-bound large subunit (CybL) of the mitochondrial electron transport chain complex II, which together with the membrane-bound small subunit (CybS), anchor the catalytic subunits to the inner mitochondria membrane. During the free-living egg-larvae stages, which occur in an aerobic environment, complex II acts as a succinate dehydrogenase by transferring electrons from succinate to ubiquinone. During the parasitic larvae and adult stages, which occur in an anaerobic environment, complex II acts as a fumarate reductase by transferring electrons from rhodoquinol to fumarate. In Ascaris suum (Pig roundworm), this protein is Succinate dehydrogenase [ubiquinone] cytochrome b large subunit, mitochondrial.